We begin with the raw amino-acid sequence, 599 residues long: Estrogen receptor (599 aa).

The modulating (transactivation AF-1); mediates interaction with MACROD1 stretch occupies residues 1–188 (MTMTLHTKAS…IMESAKETRY (188 aa)). A glycan (O-linked (GlcNAc) serine) is linked at Ser10. Residues 35-47 (MERALGEVYVDNS) form a required for interaction with NCOA1 region. The segment at 35 to 178 (MERALGEVYV…LSSSNEKGNM (144 aa)) is interaction with DDX5; self-association. Residue Thr50 is glycosylated (O-linked (GlcNAc) threonine). Residues Ser108 and Ser110 each carry the phosphoserine; by CDK2 modification. At Ser122 the chain carries Phosphoserine. The disordered stretch occupies residues 147-175 (DTGPPAFYRSNSDNRRQNGRERLSSSNEK). Residues 158–169 (SDNRRQNGRERL) show a composition bias toward basic and acidic residues. Ser171 carries the phosphoserine; by CK2 modification. NR C4-type zinc fingers lie at residues 189–209 (CAVC…CEGC) and 225–249 (CPAT…LRKC). Residues 189 to 254 (CAVCNDYASG…RLRKCYEVGM (66 aa)) constitute a DNA-binding region (nuclear receptor). The interval 189-314 (CAVCNDYASG…TKKNSPALSL (126 aa)) is mediates interaction with DNTTIP2. The interval 255 to 314 (MKGGIRKDRRGGRMLKHKRQRDDLEGRNEMGASGDMRAANLWPSPLVIKHTKKNSPALSL) is hinge. Asymmetric dimethylarginine; by PRMT1 is present on Arg264. Positions 266–599 (GRMLKHKRQR…PEAEGFPNTI (334 aa)) are interaction with AKAP13. The segment at 268–599 (MLKHKRQRDD…PEAEGFPNTI (332 aa)) is self-association. The 237-residue stretch at 315 to 551 (TADQMVSALL…DLLLEMLDAH (237 aa)) folds into the NR LBD domain. The transactivation AF-2 stretch occupies residues 315 to 599 (TADQMVSALL…PEAEGFPNTI (285 aa)). 17beta-estradiol is bound by residues Glu357 and Arg398. Cys451 carries the S-palmitoyl cysteine lipid modification. Residue His528 participates in 17beta-estradiol binding. Position 541 is a phosphotyrosine; by Tyr-kinases (Tyr541). A disordered region spans residues 557–581 (ASRMGVPPEEPSQTQLATTSSTSAH). Positions 568–581 (SQTQLATTSSTSAH) are enriched in low complexity. O-linked (GlcNAc) threonine glycosylation is present at Thr575.

The protein belongs to the nuclear hormone receptor family. NR3 subfamily. Interacts with BCAS3. Binds DNA as a homodimer. Can form a heterodimer with ESR2. Interacts with coactivator NCOA5. Interacts with PELP1, the interaction is enhanced by 17-beta-estradiol; the interaction increases ESR1 transcriptional activity. Interacts with NCOA7; the interaction is ligand-inducible. Interacts with AKAP13, CUEDC2, HEXIM1, KDM5A, MAP1S, SMARD1, and UBE1C. Interacts with MUC1; the interaction is stimulated by 7 beta-estradiol (E2) and enhances ESR1-mediated transcription. Interacts with DNTTIP2, and UIMC1. Interacts with KMT2D/MLL2. Interacts with ATAD2; the interaction is enhanced by estradiol. Interacts with KIF18A and LDB1. Interacts with RLIM (via its C-terminus). Interacts with MACROD1. Interacts with SH2D4A and PLCG. Interacts with SH2D4A; the interaction blocks binding to PLCG and inhibits estrogen-induced cell proliferation. Interacts with DYNLL1. Interacts with CCDC62; the interaction requires estradiol and appears to enhance the transcription of target genes. Interacts with NR2C1; the interaction prevents homodimerization of ESR1 and suppresses its transcriptional activity and cell growth. Interacts with DNAAF4. Interacts with PRMT2. Interacts with RBFOX2. Interacts with EP300; the interaction is estrogen-dependent and enhanced by CITED1. Interacts with CITED1; the interaction is estrogen-dependent. Interacts with FAM120B, FOXL2, PHB2 and SLC30A9. Interacts with coactivators NCOA3 and NCOA6. Interacts with STK3/MST2 only in the presence of SAV1 and vice-versa. Binds to CSNK1D. Interacts with NCOA2; NCOA2 can interact with ESR1 AF-1 and AF-2 domains simultaneously and mediate their transcriptional synergy. Interacts with DDX5. Interacts with NCOA1; the interaction seems to require a self-association of N-terminal and C-terminal regions. Interacts with ZNF366, DDX17, NFKB1, RELA, SP1 and SP3. Interacts with NRIP1. Interacts with GPER1; the interaction occurs in an estrogen-dependent manner. Interacts with CLOCK and the interaction is stimulated by estrogen. Interacts with BCAS3. Interacts with TRIP4 (ufmylated); estrogen dependent. Interacts with LMTK3; the interaction phosphorylates ESR1 (in vitro) and protects it against proteasomal degradation. Interacts with CCAR2 (via N-terminus) in a ligand-independent manner. Interacts with ZFHX3. Interacts with SFR1 in a ligand-dependent and -independent manner. Interacts with DCAF13, LATS1 and DCAF1; regulates ESR1 ubiquitination and ubiquitin-mediated proteasomal degradation. Interacts (via DNA-binding domain) with POU4F2 isoform 2 (C-terminus); this interaction increases the estrogen receptor ESR1 transcriptional activity in a DNA- and ligand 17-beta-estradiol-independent manner. Interacts with ESRRB isoform 1. Interacts with UBE3A and WBP2. Interacts with GTF2B. Interacts with RBM39. In the absence of hormonal ligand, interacts with TACC1. Interacts with PI3KR1 or PI3KR2 and PTK2/FAK1. Interacts with SRC. Interacts with BAG1; the interaction is promoted in the absence of estradiol (17-beta-estradiol/E2). Interacts with and ubiquitinated by STUB1; the interaction is promoted in the absence of estradiol (17-beta-estradiol/E2). Interacts with NEDD8. In terms of processing, phosphorylated by cyclin A/CDK2 and CK1. Phosphorylation probably enhances transcriptional activity. Dephosphorylation at Ser-122 by PPP5C inhibits its transactivation activity. Phosphorylated by LMTK3 (in vitro). Ubiquitinated. Deubiquitinated by OTUB1. Post-translationally, palmitoylated at Cys-451 by ZDHHC7 and ZDHHC21. This modification is required for plasma membrane targeting and for rapid intracellular signaling via ERK and AKT kinases and cAMP generation, but not for signaling mediated by the nuclear hormone receptor. In terms of processing, ubiquitinated; regulated by LATS1 via DCAF1 it leads to ESR1 proteasomal degradation. Deubiquitinated by OTUB1. Ubiquitinated by STUB1/CHIP; in the CA1 hippocampal region following loss of endogenous circulating estradiol (17-beta-estradiol/E2). Ubiquitinated by UBR5, leading to its degradation: UBR5 specifically recognizes and binds ligand-bound ESR1 when it is not associated with coactivators (NCOAs). In presence of NCOAs, the UBR5-degron is not accessible, preventing its ubiquitination and degradation. Dimethylated by PRMT1 at Arg-264. The methylation may favor cytoplasmic localization. Demethylated by JMJD6 at Arg-264.

Its subcellular location is the nucleus. It is found in the cytoplasm. The protein localises to the golgi apparatus. It localises to the cell membrane. Nuclear hormone receptor. The steroid hormones and their receptors are involved in the regulation of eukaryotic gene expression and affect cellular proliferation and differentiation in target tissues. Ligand-dependent nuclear transactivation involves either direct homodimer binding to a palindromic estrogen response element (ERE) sequence or association with other DNA-binding transcription factors, such as AP-1/c-Jun, c-Fos, ATF-2, Sp1 and Sp3, to mediate ERE-independent signaling. Ligand binding induces a conformational change allowing subsequent or combinatorial association with multiprotein coactivator complexes through LXXLL motifs of their respective components. Mutual transrepression occurs between the estrogen receptor (ER) and NF-kappa-B in a cell-type specific manner. Decreases NF-kappa-B DNA-binding activity and inhibits NF-kappa-B-mediated transcription from the IL6 promoter and displace RELA/p65 and associated coregulators from the promoter. Recruited to the NF-kappa-B response element of the CCL2 and IL8 promoters and can displace CREBBP. Present with NF-kappa-B components RELA/p65 and NFKB1/p50 on ERE sequences. Can also act synergistically with NF-kappa-B to activate transcription involving respective recruitment adjacent response elements; the function involves CREBBP. Can activate the transcriptional activity of TFF1. Also mediates membrane-initiated estrogen signaling involving various kinase cascades. Essential for MTA1-mediated transcriptional regulation of BRCA1 and BCAS3. Maintains neuronal survival in response to ischemic reperfusion injury when in the presence of circulating estradiol (17-beta-estradiol/E2). This is Estrogen receptor (Esr1) from Mus musculus (Mouse).